Reading from the N-terminus, the 225-residue chain is MQLRLSSGNILNEKVHKIGIIALGSFLENHGAVLPIDTDIKIASYIALKASILTGAKFLGVVIPSTEYEYVKHGIHNKPEDVYSYLRFLINEGKKIGIEKFLIVNCHGGNVLVESFLKDLEYEFDVKVEMINITFTHASTEEVSVGYVMGIAKADKETLKEHNNFNKYPEVGMVGLKEARENNKAIDEEAKVVEKFGVKLDKELGEKILKESIDKVIEKIKEMIR.

Fe cation contacts are provided by Glu28, His30, Asp39, and His107.

Belongs to the creatininase superfamily. FAPy deformylase family. In terms of assembly, homodimer. Fe(2+) is required as a cofactor. It depends on Zn(2+) as a cofactor.

It catalyses the reaction 2-amino-5-formylamino-6-(5-phospho-D-ribosylamino)pyrimidin-4(3H)-one + H2O = 2,5-diamino-6-(1-D-ribosylamino)pyrimidin-4(3H)-one 5'-phosphate + formate + H(+). Its pathway is cofactor biosynthesis; coenzyme F420 biosynthesis. It participates in cofactor biosynthesis; riboflavin biosynthesis. Catalyzes the hydrolysis of the formamide of 2-amino-5-formylamino-6-ribosylamino-4(3H)-pyrimidinone 5'-monophosphate (FAPy) to form 2,5-diamino-6-ribosylamino-4(3H)-pyrimidinone 5'-phosphate (APy). The protein is 2-amino-5-formylamino-6-ribosylaminopyrimidin-4(3H)-one 5'-monophosphate deformylase of Methanocaldococcus sp. (strain FS406-22).